A 484-amino-acid chain; its full sequence is PTS system N-acetylmuramic acid-specific EIIBC component (484 aa).

The PTS EIIB type-1 domain occupies 1–89 (MAKITSNTVS…NQLIDSLTSG (89 aa)). Cysteine 28 functions as the Phosphocysteine intermediate; for EIIB activity in the catalytic mechanism. Residues 125–484 (SKFATIFTPL…FFGCKDVDLS (360 aa)) enclose the PTS EIIC type-1 domain. The next 10 membrane-spanning stretches (helical) occupy residues 127–147 (FATI…LLGF), 168–188 (LIAY…ILIG), 194–214 (AFGG…LGYN), 228–248 (FFGF…AAII), 266–286 (MILT…LIIM), 310–330 (AAIL…QGFV), 345–365 (LFPI…ALYF), 379–399 (GAII…VTLP), 409–429 (IGGA…LPVG), and 451–471 (IFPG…VGFL).

It is found in the cell inner membrane. It carries out the reaction N-acetyl-beta-D-muramate(out) + N(pros)-phospho-L-histidyl-[protein] = N-acetyl-beta-D-muramate 6-phosphate(in) + L-histidyl-[protein]. In terms of biological role, the phosphoenolpyruvate-dependent sugar phosphotransferase system (sugar PTS), a major carbohydrate active transport system, catalyzes the phosphorylation of incoming sugar substrates concomitantly with their translocation across the cell membrane. This system is involved in N-acetylmuramic acid (MurNAc) transport, yielding cytoplasmic MurNAc-6-P. Is also able to take up anhydro-N-acetylmuramic acid (anhMurNAc), but cannot phosphorylate the carbon 6, probably because of the 1,6-anhydro ring. The protein is PTS system N-acetylmuramic acid-specific EIIBC component (murP) of Vibrio parahaemolyticus serotype O3:K6 (strain RIMD 2210633).